The primary structure comprises 896 residues: MTDVTIKALASEIQTSVDRLIQQFADAGIRKSADDSVTAQEKQTLLTHLNREHGSAPDKLTLQRKTRSTLNIPGTGGKSKSVQIEVRKKRTFVKRDPQEAERLAAEEQAQREAEEQARREAEEAAKREAQLKAEREAAEQAKRELADKAKREAAEKDKVSNQQTDDMTKTAQAEKQRRENEAAELKRKSEEEARRKLEEEARRVAEEARRMAQENEKNWTEAPETPEETTDYHVTTSQHARQAEDDNDREVEGGRGRGRNAKAARPAKKGNKHAESKADREEARAAVRGGKGGKHRKGSALQQGFQKPAQAVNRDVIIGETITVGDLANKMAVKGSQVIKAMMKLGAMATINQVIDQETAQLVAEEMGHKVILRRENELEEAVMSDRDTGAAAEPRAPVVTIMGHVDHGKTSLLDYIRSTKVASGEAGGITQHIGAYHVETDNGMITFLDTPGHAAFTSMRARGAQATDIVVLVVAADDGVMPQTIEAIQHAKAAQVPLVVAVNKIDKPEADLDRVKNELSQYGVMPEEWGGEAQFIPVSAKAGTGIDDLLNAILLQAEVLELKAVRNGMASGAVIESFLDKGRGPVATVLVREGTLHKGDIVLCGFEYGRVRAMRNELGQEVLEAGPSIPVEILGLSGVPAAGDEVTVVRDEKKAREVALYRQGKFREVKLARQQKSKLENMFANMTEGEVHEVNIVLKADVQGSVEAISDSLLKLSTDEVKVKIIGSGVGGITETDATLAAASNAILVGFNVRADASARKVIDAESLDLRYYSVIYHLIDEVKAAMSGMLSPELKQQIIGLAEVRDVFKSPKFGAIAGCMVTEGTIKRHNPIRVLRDNVVIYEGELESLRRFKDDVNEVRNGMECGIGVKNYNDVRVGDMIEVFEIIEIQRTID.

Basic and acidic residues-rich tracts occupy residues 94–159 and 166–219; these read KRDP…KDKV and DMTK…EKNW. The tract at residues 94-307 is disordered; sequence KRDPQEAERL…GSALQQGFQK (214 aa). Over residues 256–271 the composition is skewed to basic residues; the sequence is GRGRNAKAARPAKKGN. The span at 272–285 shows a compositional bias: basic and acidic residues; sequence KHAESKADREEARA. Residues 395–564 enclose the tr-type G domain; the sequence is PRAPVVTIMG…LLQAEVLELK (170 aa). The G1 stretch occupies residues 404-411; sequence GHVDHGKT. GTP is bound at residue 404 to 411; that stretch reads GHVDHGKT. The G2 stretch occupies residues 429 to 433; it reads GITQH. The interval 450–453 is G3; the sequence is DTPG. Residues 450–454 and 504–507 contribute to the GTP site; these read DTPGH and NKID. The segment at 504–507 is G4; sequence NKID. A G5 region spans residues 540–542; the sequence is SAK.

It belongs to the TRAFAC class translation factor GTPase superfamily. Classic translation factor GTPase family. IF-2 subfamily.

The protein resides in the cytoplasm. One of the essential components for the initiation of protein synthesis. Protects formylmethionyl-tRNA from spontaneous hydrolysis and promotes its binding to the 30S ribosomal subunits. Also involved in the hydrolysis of GTP during the formation of the 70S ribosomal complex. The sequence is that of Translation initiation factor IF-2 (infB) from Klebsiella oxytoca.